The sequence spans 360 residues: Isopentenyl-diphosphate delta-isomerase (360 aa).

12–13 (RK) lines the substrate pocket. Residues 69–71 (SMT), serine 99, and asparagine 130 contribute to the FMN site. 99–101 (SQR) contributes to the substrate binding site. Glutamine 164 is a binding site for substrate. Glutamate 165 lines the Mg(2+) pocket. FMN-binding positions include lysine 196, threonine 226, 277-279 (GVR), and 298-299 (AK).

It belongs to the IPP isomerase type 2 family. Homooctamer. Dimer of tetramers. Requires FMN as cofactor. NADPH serves as cofactor. It depends on Mg(2+) as a cofactor.

The protein resides in the cytoplasm. The catalysed reaction is isopentenyl diphosphate = dimethylallyl diphosphate. Involved in the biosynthesis of isoprenoids. Catalyzes the 1,3-allylic rearrangement of the homoallylic substrate isopentenyl (IPP) to its allylic isomer, dimethylallyl diphosphate (DMAPP). This is Isopentenyl-diphosphate delta-isomerase from Halobacterium salinarum (strain ATCC 700922 / JCM 11081 / NRC-1) (Halobacterium halobium).